The chain runs to 1662 residues: Cortactin-binding protein 2 (1662 aa).

Disordered regions lie at residues 1–23, 202–235, 365–439, and 453–477; these read MATD…AGAA, KKKT…EFDT, IGVS…LHPG, and GNAN…SPTS. Residues 118-275 are a coiled coil; that stretch reads RKMQERMSAQ…EQLKRGSDSK (158 aa). Over residues 385-395 the composition is skewed to low complexity; that stretch reads PSTGSTPDPTS. A compositionally biased stretch (polar residues) spans 404–421; it reads AAPSTAQTPGITPQNSQA. Asymmetric dimethylarginine is present on Arg-497. The tract at residues 498-615 is disordered; that stretch reads FTGPQAGAPP…SSPQLPPKPS (118 aa). Polar residues-rich tracts occupy residues 516 to 529 and 582 to 592; these read DVST…TSVK and TVASPPSSLPQ. ANK repeat units follow at residues 708 to 738, 742 to 771, 775 to 804, 808 to 837, and 841 to 870; these read GRPT…DINY, DGHS…QVNA, NGFT…NINH, GGQT…DRSV, and DGWT…PAHG. The tract at residues 871–897 is disordered; that stretch reads NSFSEEESESGVFDLDEGEESPEGKSK. Over residues 874-891 the composition is skewed to acidic residues; the sequence is SEEESESGVFDLDEGEES. An ANK 6 repeat occupies 911–941; the sequence is EGWTAAHIAASKGFKNCLEILCRHGGLETER. The disordered stretch occupies residues 1446-1473; that stretch reads KKKGESGAWRKVNTSPRRKSGRFSLPTW. Ser-1523 carries the phosphoserine modification. The interval 1614 to 1662 is disordered; it reads VPRSKVTQCSQNTKRSSSSSNTRQIEINNNSKEENWNLHKNEHLEKPNK. The span at 1623-1637 shows a compositional bias: low complexity; the sequence is SQNTKRSSSSSNTRQ. The span at 1644–1662 shows a compositional bias: basic and acidic residues; it reads SKEENWNLHKNEHLEKPNK.

As to quaternary structure, interacts with CTTN/cortactin SH3 domain. Interacts with STRN, STRN4/zinedin and MOB4/phocein; this interactions mediate the association with the STRIPAK core complex and may regulate dendritic spine distribution of the STRIPAK complex in hippocampal neurons. Activation of glutamate receptors weakens the interaction with STRN and STRN4.

Its subcellular location is the cytoplasm. The protein resides in the cell cortex. The protein localises to the cell projection. It is found in the dendritic spine. Functionally, regulates the dendritic spine distribution of CTTN/cortactin in hippocampal neurons, and thus controls dendritic spinogenesis and dendritic spine maintenance. Associates with the striatin-interacting phosphatase and kinase (STRIPAK) core complex to regulate dendritic spine distribution of the STRIPAK complex in hippocampal neurons. In Callithrix jacchus (White-tufted-ear marmoset), this protein is Cortactin-binding protein 2 (CTTNBP2).